The primary structure comprises 435 residues: Histidinol dehydrogenase (435 aa).

NAD(+) is bound by residues Y131, Q189, and N212. Residues S238, Q260, and H263 each coordinate substrate. Residues Q260 and H263 each contribute to the Zn(2+) site. Residues E327 and H328 each act as proton acceptor in the active site. Substrate contacts are provided by H328, D361, E415, and H420. D361 contacts Zn(2+). H420 contacts Zn(2+).

The protein belongs to the histidinol dehydrogenase family. In terms of assembly, homodimer. Zn(2+) serves as cofactor.

The enzyme catalyses L-histidinol + 2 NAD(+) + H2O = L-histidine + 2 NADH + 3 H(+). The protein operates within amino-acid biosynthesis; L-histidine biosynthesis; L-histidine from 5-phospho-alpha-D-ribose 1-diphosphate: step 9/9. In terms of biological role, catalyzes the sequential NAD-dependent oxidations of L-histidinol to L-histidinaldehyde and then to L-histidine. In Buchnera aphidicola subsp. Baizongia pistaciae (strain Bp), this protein is Histidinol dehydrogenase.